The primary structure comprises 485 residues: MVGVTPQSGKPRTLAEKVWDDHVVRTAAEGEPDLLFIDLHLLHEVTSPQAFDGLRMAGRRVRRTDLTLATEDHNTPTGYADPSFNTRRGELLTIADTVSRTQIETLRKNCAEFGVEIRPLGDVNQGIVHVIGPQLGLTQPGMTIVCGDSHTATHGASGALAFGIGTSEVEHVLATQTLPQSKPKTMAVTVVGELRPGVSAKDLILTLITQTGTGGGNGHIVEYRGEAIRKLSMEGRMTICNMSIEWGAKAGMIAPDETTFDYLSGRKHARRGADWDAAVAYWKTLATDEGAEYDTEIILDASKISPFITWGTNPGQGAALDGVVPDPQDFLDEVERGAAERALAYMGLTPGTPFRDVPVDVVFVGSCTNGRLEDLRAAADVIRGRKVADGVRMMIVPGSYQVREQAEAEGLDKIFIDAGAEWRFAGCSMCLGMNPDTLSPGQRAASTSNRNFEGRQGKGGRTHLVSPQVAAATAVVGKLAAPADL.

[4Fe-4S] cluster contacts are provided by Cys367, Cys427, and Cys430. The segment covering 439 to 451 has biased composition (polar residues); that stretch reads SPGQRAASTSNRN. The interval 439-462 is disordered; sequence SPGQRAASTSNRNFEGRQGKGGRT.

The protein belongs to the aconitase/IPM isomerase family. LeuC type 1 subfamily. Heterodimer of LeuC and LeuD. The cofactor is [4Fe-4S] cluster.

It carries out the reaction (2R,3S)-3-isopropylmalate = (2S)-2-isopropylmalate. Its pathway is amino-acid biosynthesis; L-leucine biosynthesis; L-leucine from 3-methyl-2-oxobutanoate: step 2/4. Functionally, catalyzes the isomerization between 2-isopropylmalate and 3-isopropylmalate, via the formation of 2-isopropylmaleate. This Actinoplanes teichomyceticus protein is 3-isopropylmalate dehydratase large subunit.